Here is a 289-residue protein sequence, read N- to C-terminus: Probable signal peptidase I (289 aa).

At 1-53 the chain is on the cytoplasmic side; the sequence is MTETTDSVPEPPSDADQLQPKVSICGLDMPAEVSETAAEAAIGVSEPKKRSAL. The chain crosses the membrane as a helical span at residues 54–74; sequence WEFAILAVIAIGLYYVMLTFV. The Extracellular segment spans residues 75–289; that stretch reads ARPYLIPSES…VGSVNSQQGQ (215 aa). Catalysis depends on residues S84 and K162.

The protein belongs to the peptidase S26 family.

The protein localises to the cell membrane. It catalyses the reaction Cleavage of hydrophobic, N-terminal signal or leader sequences from secreted and periplasmic proteins.. This Mycobacterium leprae (strain TN) protein is Probable signal peptidase I (lepB).